A 259-amino-acid chain; its full sequence is Ribonuclease HII (259 aa).

One can recognise an RNase H type-2 domain in the interval 70-258 (TLIAGIDEVG…VKSLVLGKKE (189 aa)). 3 residues coordinate a divalent metal cation: Asp76, Glu77, and Asp168.

The protein belongs to the RNase HII family. Mn(2+) is required as a cofactor. Requires Mg(2+) as cofactor.

It is found in the cytoplasm. The enzyme catalyses Endonucleolytic cleavage to 5'-phosphomonoester.. Functionally, endonuclease that specifically degrades the RNA of RNA-DNA hybrids. In Streptococcus pneumoniae (strain Taiwan19F-14), this protein is Ribonuclease HII.